The sequence spans 877 residues: MQDKYSPSEVEQQAQQHWQAQDAYRVTEHARAADGSDKPKFYACSMLPYPSGKLHMGHVRNYTINDVMMRQLRMKGYNVLMPMGWDAFGMPAENAALNNGVAPAAWTYDNIAYMKKQMQSMGLAIDWSREVATCSPDYYKWNQWLFLKMLEKGIAYRKTGTVNWDPIDQTVLANEQVIDGRGWRSGAVVEKREIPMYYLRITDYAQELLSDLDPLGWPERVKLMQQNWIGKSEGVRFAFPHGIPGDDGKVIGDGKLYVFTTRADTIMGVTFCAVAAEHPIAAHAAQGNPALAAFIDECKHGSVMEADMATMEKKGMPTGLTVTHPLTGEAVPVWVGNYVLMTYGDGAVMGVPAHDERDFAFANKYGLAIKQVIDVKGQPFGTEAWQEWYADKERGVLVHSGKYDGLDYRQAVDAVAADLAAQGLGEKKTTWRLRDWGISRQRYWGTPIPLIHCDSCGVVPVPEQDLPVRLPEDLVPDGSGNPLAKDARFLECTCPSCGKPARRETDTMDTFIDSCWYYMRYTCPDGATMVDGRNDYWMPMDQYIGGIEHAILHLLYARFWTKVMRDLGLVKFDEPFTKLLTQGMVLNETYYREDAAGKKQWINPADVDVQTDDRGRPIGATLKADGQPVVIGGVEKMSKSKNNGIDPQALIDQYGADTARLFTMFAAPPEQQLEWSDAGVEGASRFLRRAWNFGVAHAESIRAGHGNGVVNGATDADRALRRELHTVLKQANYDYERLQYNTVVSAAMKMLNALEGAKDAGADARREGLGILLRVLYPVVPHITHVLWQELGYAGAYGGLLDAPWPQVDEGALVQSEIELVLQVNGKVRGSIVVPADADRAAIEAIAAKDEAVHRFAEGKPPKKIIVVPGRLVNVVA.

Residues 48 to 58 (PYPSGKLHMGH) carry the 'HIGH' region motif. Positions 636–640 (KMSKS) match the 'KMSKS' region motif. Lys-639 serves as a coordination point for ATP.

Belongs to the class-I aminoacyl-tRNA synthetase family.

Its subcellular location is the cytoplasm. It carries out the reaction tRNA(Leu) + L-leucine + ATP = L-leucyl-tRNA(Leu) + AMP + diphosphate. The chain is Leucine--tRNA ligase from Ralstonia nicotianae (strain ATCC BAA-1114 / GMI1000) (Ralstonia solanacearum).